The following is a 160-amino-acid chain: 2-C-methyl-D-erythritol 2,4-cyclodiphosphate synthase (160 aa).

Positions 10 and 12 each coordinate a divalent metal cation. Residues 10–12 (DVH) and 36–37 (HS) contribute to the 4-CDP-2-C-methyl-D-erythritol 2-phosphate site. His-44 contacts a divalent metal cation. Residues 58 to 60 (DIG), 63 to 67 (FPDTD), 102 to 108 (AQAPKMA), 134 to 137 (TTTE), Phe-141, and Arg-144 each bind 4-CDP-2-C-methyl-D-erythritol 2-phosphate.

This sequence belongs to the IspF family. In terms of assembly, homotrimer. A divalent metal cation is required as a cofactor.

The catalysed reaction is 4-CDP-2-C-methyl-D-erythritol 2-phosphate = 2-C-methyl-D-erythritol 2,4-cyclic diphosphate + CMP. It functions in the pathway isoprenoid biosynthesis; isopentenyl diphosphate biosynthesis via DXP pathway; isopentenyl diphosphate from 1-deoxy-D-xylulose 5-phosphate: step 4/6. In terms of biological role, involved in the biosynthesis of isopentenyl diphosphate (IPP) and dimethylallyl diphosphate (DMAPP), two major building blocks of isoprenoid compounds. Catalyzes the conversion of 4-diphosphocytidyl-2-C-methyl-D-erythritol 2-phosphate (CDP-ME2P) to 2-C-methyl-D-erythritol 2,4-cyclodiphosphate (ME-CPP) with a corresponding release of cytidine 5-monophosphate (CMP). In Shewanella denitrificans (strain OS217 / ATCC BAA-1090 / DSM 15013), this protein is 2-C-methyl-D-erythritol 2,4-cyclodiphosphate synthase.